The primary structure comprises 449 residues: Hyaluronidase-1 (449 aa).

The signal sequence occupies residues 1-23 (MYHLWIKCLAAWIFLKRCNGVHA). 2 disulfides stabilise this stretch: Cys47/Cys340 and Cys211/Cys227. N-linked (GlcNAc...) asparagine glycans are attached at residues Asn67, Asn103, and Asn111. Catalysis depends on Glu135, which acts as the Proton donor. N-linked (GlcNAc...) asparagine glycosylation occurs at Asn153. N-linked (GlcNAc...) asparagine glycosylation is present at Asn357. Disulfide bonds link Cys365/Cys376, Cys370/Cys427, and Cys429/Cys438. A glycan (N-linked (GlcNAc...) asparagine) is linked at Asn401. Positions 427–438 (CQCYQGWKGLYC) constitute an EGF-like domain.

This sequence belongs to the glycosyl hydrolase 56 family. In terms of assembly, monomer. Expressed by the venom gland.

It localises to the secreted. The enzyme catalyses Random hydrolysis of (1-&gt;4)-linkages between N-acetyl-beta-D-glucosamine and D-glucuronate residues in hyaluronate.. Functionally, snake venom endo-hyaluronidase that degrades hyaluronan to smaller oligosaccharide fragments. In venom, it is not toxic by itself, but increases the diffusion of other venom proteins by degrading the extracellular matrix. In addition, it displays antiedematogenic activity. This Bitis arietans (African puff adder) protein is Hyaluronidase-1.